We begin with the raw amino-acid sequence, 248 residues long: Mitochondrial import inner membrane translocase subunit Tim21 (248 aa).

A mitochondrion-targeting transit peptide spans 1 to 18; the sequence is MICTFLRAVQYTEKLHRS. The interval 67–98 is disordered; that stretch reads TQGPSPRKAKEDGSKQVSVHRSQRGGTAVPTS. A helical membrane pass occupies residues 108–128; that stretch reads FTYLIVVLFGISITGGLFYTI.

Belongs to the TIM21 family. Component of the TIM23 complex. Component of the MITRAC (mitochondrial translation regulation assembly intermediate of cytochrome c oxidase complex) complex, the core components of this complex being COA3/MITRAC12 and COX14. Interacts with COA3 and MT-CO1/COX1.

It is found in the mitochondrion membrane. Participates in the translocation of transit peptide-containing proteins across the mitochondrial inner membrane. Also required for assembly of mitochondrial respiratory chain complex I and complex IV as component of the MITRAC (mitochondrial translation regulation assembly intermediate of cytochrome c oxidase complex) complex. Probably shuttles between the presequence translocase and respiratory-chain assembly intermediates in a process that promotes incorporation of early nuclear-encoded subunits into these complexes. This is Mitochondrial import inner membrane translocase subunit Tim21 (TIMM21) from Homo sapiens (Human).